Reading from the N-terminus, the 448-residue chain is Alginate biosynthesis transcriptional regulatory protein AlgB (448 aa).

The region spanning 10–124 (RILLVDDESA…QLRLATAKQL (115 aa)) is the Response regulatory domain. Residue Asp-59 is modified to 4-aspartylphosphate. The 230-residue stretch at 147–376 (LDSHSPSMMA…LRNVIERASI (230 aa)) folds into the Sigma-54 factor interaction domain. ATP contacts are provided by residues 175-182 (GESGTGKG) and 238-247 (ADGGTLFLDE). A DNA-binding region (H-T-H motif) is located at residues 425 to 444 (LDQAAKTLGIDASTLYRKRK).

It participates in glycan biosynthesis; alginate biosynthesis [regulation]. Its function is as follows. Positive regulator of the alginate biosynthetic gene algD. The chain is Alginate biosynthesis transcriptional regulatory protein AlgB (algB) from Pseudomonas syringae pv. tomato (strain ATCC BAA-871 / DC3000).